The chain runs to 211 residues: Ribosomal RNA small subunit methyltransferase G (211 aa).

Residues Gly74, Leu79, Ala125–Glu126, and Arg140 contribute to the S-adenosyl-L-methionine site.

Belongs to the methyltransferase superfamily. RNA methyltransferase RsmG family.

The protein localises to the cytoplasm. Specifically methylates the N7 position of guanine in position 518 of 16S rRNA. The protein is Ribosomal RNA small subunit methyltransferase G of Clavibacter sepedonicus (Clavibacter michiganensis subsp. sepedonicus).